A 188-amino-acid polypeptide reads, in one-letter code: Phosphoribosylglycinamide formyltransferase (188 aa).

A N(1)-(5-phospho-beta-D-ribosyl)glycinamide-binding site is contributed by 12-14; it reads GSN. (6R)-10-formyltetrahydrofolate-binding positions include Lys-66, 91–94, and Asn-108; that span reads MRLI. Residue His-110 is the Proton donor of the active site.

This sequence belongs to the GART family.

The catalysed reaction is N(1)-(5-phospho-beta-D-ribosyl)glycinamide + (6R)-10-formyltetrahydrofolate = N(2)-formyl-N(1)-(5-phospho-beta-D-ribosyl)glycinamide + (6S)-5,6,7,8-tetrahydrofolate + H(+). It functions in the pathway purine metabolism; IMP biosynthesis via de novo pathway; N(2)-formyl-N(1)-(5-phospho-D-ribosyl)glycinamide from N(1)-(5-phospho-D-ribosyl)glycinamide (10-formyl THF route): step 1/1. Catalyzes the transfer of a formyl group from 10-formyltetrahydrofolate to 5-phospho-ribosyl-glycinamide (GAR), producing 5-phospho-ribosyl-N-formylglycinamide (FGAR) and tetrahydrofolate. The sequence is that of Phosphoribosylglycinamide formyltransferase from Staphylococcus aureus (strain MSSA476).